Consider the following 203-residue polypeptide: Probable GTP-binding protein EngB (203 aa).

Positions 22–195 constitute an EngB-type G domain; that stretch reads GIPEIALAGR…WEEIVNQYNQ (174 aa). Residues 30–37, 57–61, 75–78, 142–145, and 174–176 contribute to the GTP site; these read GRSNVGKS, GKTRT, DLPG, TKAD, and VSS. Positions 37 and 59 each coordinate Mg(2+).

The protein belongs to the TRAFAC class TrmE-Era-EngA-EngB-Septin-like GTPase superfamily. EngB GTPase family. Mg(2+) serves as cofactor.

Its function is as follows. Necessary for normal cell division and for the maintenance of normal septation. The chain is Probable GTP-binding protein EngB from Clostridioides difficile (strain 630) (Peptoclostridium difficile).